Reading from the N-terminus, the 205-residue chain is Carboxysome shell protein CsoS1D (205 aa).

BMC circularly permuted domains follow at residues 3-100 (ELRT…TREY) and 106-205 (VVMW…TCRS). The short motif at 68–69 (ER) is the Gates the pore element.

Belongs to the EutL/PduB family. In terms of assembly, homotrimer. Forms a dimer of stacked trimers, the same faces interact. Probably forms a CsoS1-CsoS1D-CsoS2 complex.

Its subcellular location is the carboxysome. Part of the carboxysome shell, a polyhedral inclusion where RuBisCO (ribulose bisphosphate carboxylase, cbbL-cbbS) is sequestered. It may control transport of RuBisCO reactants in and out of the carboxysome. In Hydrogenovibrio crunogenus (strain DSM 25203 / XCL-2) (Thiomicrospira crunogena), this protein is Carboxysome shell protein CsoS1D.